We begin with the raw amino-acid sequence, 185 residues long: Elongation factor P (185 aa).

It belongs to the elongation factor P family.

The protein localises to the cytoplasm. It functions in the pathway protein biosynthesis; polypeptide chain elongation. Its function is as follows. Involved in peptide bond synthesis. Stimulates efficient translation and peptide-bond synthesis on native or reconstituted 70S ribosomes in vitro. Probably functions indirectly by altering the affinity of the ribosome for aminoacyl-tRNA, thus increasing their reactivity as acceptors for peptidyl transferase. This Mesomycoplasma hyopneumoniae (strain 7448) (Mycoplasma hyopneumoniae) protein is Elongation factor P.